The following is a 455-amino-acid chain: Vimentin (455 aa).

Residues Met-1–Phe-87 form a head region. Positions Phe-87–Leu-122 form a coiled coil. The interval Lys-88–Leu-122 is coil 1A. The IF rod domain maps to Glu-94–Ile-402. The interval Ile-123–Glu-144 is linker 1. Residues Met-145–Leu-236 are a coiled coil. Residues Met-145–Leu-236 are coil 1B. Positions Gln-237–Ala-259 are linker 12. Residues Leu-260–Glu-398 form a coil 2 region. The stretch at Ala-294–Glu-398 forms a coiled coil. The tail stretch occupies residues Glu-399–Glu-455.

Belongs to the intermediate filament family. In terms of assembly, homomer assembled from elementary dimers. Post-translationally, one of the most prominent phosphoproteins in various cells of mesenchymal origin. Phosphorylation is enhanced during cell division, at which time vimentin filaments are significantly reorganized.

Its subcellular location is the cytoplasm. It localises to the cytoskeleton. The protein localises to the nucleus matrix. Its function is as follows. Vimentins are class-III intermediate filaments found in various non-epithelial cells, especially mesenchymal cells. Vimentin is attached to the nucleus, endoplasmic reticulum, and mitochondria, either laterally or terminally. The protein is Vimentin (vim) of Cyprinus carpio (Common carp).